Consider the following 523-residue polypeptide: Alanine aminotransferase 2 (523 aa).

The segment at 1–25 is disordered; it reads MQRAAALVRRGCGPRTPSSWGRSQS. Pyridoxal 5'-phosphate contacts are provided by alanine 187, serine 188, tyrosine 216, asparagine 271, and serine 338. Lysine 341 bears the N6-(pyridoxal phosphate)lysine mark. Arginine 350 is a binding site for pyridoxal 5'-phosphate. 3 positions are modified to N6-acetyllysine: lysine 415, lysine 505, and lysine 512.

The protein belongs to the class-I pyridoxal-phosphate-dependent aminotransferase family. Alanine aminotransferase subfamily. In terms of assembly, homodimer. Pyridoxal 5'-phosphate is required as a cofactor. In terms of tissue distribution, expressed at high levels in muscle, adipose tissue, kidney and brain and at lower levels in the liver and breast.

The enzyme catalyses L-alanine + 2-oxoglutarate = pyruvate + L-glutamate. Its pathway is amino-acid degradation; L-alanine degradation via transaminase pathway; pyruvate from L-alanine: step 1/1. Its function is as follows. Catalyzes the reversible transamination between alanine and 2-oxoglutarate to form pyruvate and glutamate. This Homo sapiens (Human) protein is Alanine aminotransferase 2 (GPT2).